The following is an 869-amino-acid chain: Mismatch repair endonuclease PMS2 (869 aa).

ATP is bound by residues asparagine 44, aspartate 69, glutamate 108, alanine 109, and leucine 110. Residues arginine 585 to lysine 588 carry the Nuclear localization signal motif.

Belongs to the DNA mismatch repair MutL/HexB family.

Its subcellular location is the nucleus. The catalysed reaction is ATP + H2O = ADP + phosphate + H(+). Functionally, component of the post-replicative DNA mismatch repair system (MMR). Involved in B cell growth by positively regulating B cell proliferation and controlling replication efficiency. Controls cell cycle to prevent re-replication and defects in DNA damage-induced G2 checkpoint. Doesn't seem to counteract or control the immunoglobulin gene conversion (Ig GC) and to contribute to guanine/uracil mismatch repair. Possesses an ATPase activity, but in the absence of gross structural changes, ATP hydrolysis may not be necessary for proficient mismatch repair. This Gallus gallus (Chicken) protein is Mismatch repair endonuclease PMS2.